A 1483-amino-acid polypeptide reads, in one-letter code: Heme-responsive zinc finger transcription factor HAP1 (1483 aa).

A compositionally biased stretch (polar residues) spans 1–50; it reads MSNTPYNSSVPSIASMTQSSVSRSPNMHTATTPGANTSSNSPPLHMSSDS. The segment at 1 to 56 is disordered; it reads MSNTPYNSSVPSIASMTQSSVSRSPNMHTATTPGANTSSNSPPLHMSSDSSKIKRK. Zn(2+)-binding residues include Cys64, Cys67, Cys74, Cys81, Cys84, and Cys93. The zn(2)-C6 fungal-type DNA-binding region spans 64-93; the sequence is CTICRKRKVKCDKLRPHCQQCTKTGVAHLC. Residues 105-134 adopt a coiled-coil conformation; the sequence is EKELLKDNELKKLRERVKSLEKTLSKVHSS. The segment at 126–208 is disordered; that stretch reads KTLSKVHSSP…ANSSSLSISN (83 aa). Positions 130–142 are enriched in low complexity; it reads KVHSSPSSNSLKS. Polar residues-rich tracts occupy residues 143–152 and 160–176; these read YNTPESSNLF and TLVN…SHMH. Over residues 177–208 the composition is skewed to low complexity; that stretch reads QQQQQQQQQEQQQDFSRSANANANSSSLSISN. The heme-responsive; required for HMC formation stretch occupies residues 244–444; that stretch reads KGDPYLKLLW…NTIPHHQPQS (201 aa). HRM repeat units lie at residues 280–285, 299–304, 323–328, 347–352, 389–394, and 415–420; these read KCPINH, KCPVDH, RCPVDH, and RCPIDH. Composition is skewed to polar residues over residues 432–447 and 706–734; these read STHN…SGSH and QLNA…NPTL. Disordered stretches follow at residues 432 to 458 and 706 to 767; these read STHN…SRKH and QLNA…KENQ. The segment covering 735 to 759 has biased composition (low complexity); it reads NNNMSAATTNSSSRSGSADSRSGSN. The stretch at 1192–1197 is one HRM 7 repeat; sequence KCPVYQ. Residues 1384 to 1411 are disordered; that stretch reads TANTDTSANGSALSTLTSPQGSDLASNS. Residues 1388–1411 show a composition bias toward polar residues; it reads DTSANGSALSTLTSPQGSDLASNS.

As to quaternary structure, binds DNA as a homodimer. Interacts with SRO9 and YDJ1. In the absence of heme, binds to at least four cellular proteins, including YDJ1 and SRO9, forming a high-molecular-weight complex (HMC) which results in repression of its activity and dictates its DNA-binding specificity.

It localises to the nucleus. Functionally, regulation of oxygen dependent gene expression. It modulates the expression of Iso-1 (CYP1) and Iso-2 (CYP3) cytochrome c. In response to heme, promotes transcription of genes encoding functions required for respiration, controlling oxidative damage and repression of anaerobic genes. Binds to the sequence 5'-CGGNNNTNNCGG-3'. Is non-functional in terms of iso-1 cytochrome c expression in strain S288c and its derivatives. This Saccharomyces cerevisiae (Baker's yeast) protein is Heme-responsive zinc finger transcription factor HAP1 (HAP1).